Here is a 301-residue protein sequence, read N- to C-terminus: MDDAKNSAVDVLEKQAAFLSSALPYMQKYENETVVVKYGGHAMGDPALGRAFARDIALLKQSGINPVVVHGGGPQIAEILMKMGIESRFENGLRVTDERIVEVVEMVLAGSINKEIVALINAEGEWAIGLCGKDGNMVFAEKAYRTVIDPDSHIERVLDLGFVGEPIEVDRTLLDLLACSEMIPVLAPVAPGRDGKTYNINADIFAGAIAGALEAKRLLFLTDVPGVLDKQGKLLKELTVSEAEKLIKNGTISGGMIPKVETCVKALQNGVEGVVILNGKTPHSVLLELFTEQGVGTLIVS.

Residues 72–73, arginine 94, and asparagine 199 contribute to the substrate site; that span reads GG.

It belongs to the acetylglutamate kinase family. ArgB subfamily.

The protein resides in the cytoplasm. The enzyme catalyses N-acetyl-L-glutamate + ATP = N-acetyl-L-glutamyl 5-phosphate + ADP. Its pathway is amino-acid biosynthesis; L-arginine biosynthesis; N(2)-acetyl-L-ornithine from L-glutamate: step 2/4. Catalyzes the ATP-dependent phosphorylation of N-acetyl-L-glutamate. In Bartonella tribocorum (strain CIP 105476 / IBS 506), this protein is Acetylglutamate kinase.